The following is an 86-amino-acid chain: RNA-binding protein Hfq (86 aa).

Positions 9–68 (DPYLNTLRKERVPVSIYLVNGIKLQGQIESFDQFVILLKNTVSQMVYKHAISTVVPSRPV) constitute a Sm domain. The tract at residues 66–86 (RPVRLPSAGDSEQADAEPGNA) is disordered.

The protein belongs to the Hfq family. In terms of assembly, homohexamer.

Its function is as follows. RNA chaperone that binds small regulatory RNA (sRNAs) and mRNAs to facilitate mRNA translational regulation in response to envelope stress, environmental stress and changes in metabolite concentrations. Also binds with high specificity to tRNAs. The protein is RNA-binding protein Hfq of Ectopseudomonas mendocina (strain ymp) (Pseudomonas mendocina).